Here is an 85-residue protein sequence, read N- to C-terminus: Small ribosomal subunit protein uS17 (85 aa).

Belongs to the universal ribosomal protein uS17 family. In terms of assembly, part of the 30S ribosomal subunit.

Functionally, one of the primary rRNA binding proteins, it binds specifically to the 5'-end of 16S ribosomal RNA. This chain is Small ribosomal subunit protein uS17, found in Blochmanniella floridana.